Consider the following 462-residue polypeptide: Protein phosphatase 1M (462 aa).

Over residues 1-10 (MSAGWFRRRF) the composition is skewed to basic residues. Positions 1–66 (MSAGWFRRRF…PVRSPARGRT (66 aa)) are disordered. The PPM-type phosphatase domain occupies 100-452 (EFGIEEDQEW…DDVSVFVIPL (353 aa)). Asp-127 and Gly-128 together coordinate Mn(2+).

The protein belongs to the PP2C family. It depends on Mg(2+) as a cofactor. Mn(2+) is required as a cofactor. In terms of tissue distribution, widely expressed with highest levels in testis and lower levels in lung, kidney and brain.

It localises to the nucleus. The catalysed reaction is O-phospho-L-seryl-[protein] + H2O = L-seryl-[protein] + phosphate. It carries out the reaction O-phospho-L-threonyl-[protein] + H2O = L-threonyl-[protein] + phosphate. The polypeptide is Protein phosphatase 1M (Mus musculus (Mouse)).